The primary structure comprises 143 residues: NADH-quinone oxidoreductase subunit A (143 aa).

The next 3 membrane-spanning stretches (helical) occupy residues 7–27 (GFGNVFVFLALGIVFVAGGYL), 63–83 (FYVVALIFIIFDVEVVFLYPW), and 93–113 (FALFEALVFAGILILGLAYAW).

The protein belongs to the complex I subunit 3 family. NDH-1 is composed of 14 different subunits. Subunits NuoA, H, J, K, L, M, N constitute the membrane sector of the complex.

It localises to the cell inner membrane. The enzyme catalyses a quinone + NADH + 5 H(+)(in) = a quinol + NAD(+) + 4 H(+)(out). Its function is as follows. NDH-1 shuttles electrons from NADH, via FMN and iron-sulfur (Fe-S) centers, to quinones in the respiratory chain. The immediate electron acceptor for the enzyme in this species is believed to be a menaquinone. Couples the redox reaction to proton translocation (for every two electrons transferred, four hydrogen ions are translocated across the cytoplasmic membrane), and thus conserves the redox energy in a proton gradient. The protein is NADH-quinone oxidoreductase subunit A of Chlorobium limicola (strain DSM 245 / NBRC 103803 / 6330).